Here is a 331-residue protein sequence, read N- to C-terminus: Laforin (331 aa).

In terms of domain architecture, CBM20 spans 1-124; sequence MRFRFGVVVP…NNLVDGVYCL (124 aa). Residue S25 is modified to Phosphoserine; by AMPK. Substrate is bound by residues W32, K87, 103–107, D197, D235, and R241; that span reads GPHHD. The region spanning 156–323 is the Tyrosine-protein phosphatase domain; it reads HYSRILPNIW…QEDFFQKFGK (168 aa). C266 acts as the Phosphocysteine intermediate in catalysis. Positions 266 to 272 match the Glucan phosphatase signature motif CXAGXGR motif; the sequence is CNAGVGR. Substrate-binding positions include 267-272 and Y304; that span reads NAGVGR.

Belongs to the protein-tyrosine phosphatase family. In terms of assembly, homodimer. Interacts with itself. Interacts with PPP1R3B, PPP1R3C, PPP1R3D, HIRIP5, and EPM2AIP1. Binds glycogen and Lafora bodies. Interacts with NHLRC1/malin (via the NHL repeats). Forms a complex with NHLRC1/malin and HSP70. Interacts with PPP1R3D; in the presence of NHLC1/malin the interaction leads to ubiquitination and autophagic degradation of PPP1R3D. Interacts (via the phosphatase domain) with MAPT/Tau; the interaction dephosphorylates MAPT. Isoform 1 and isoform 2 interact to form a heterodimeric complex that lacks phosphatase activity (in vitro). Active phosphatase isoform 7 and isoform 1 interact with each other, but give rise to lower phosphatase activity than isoform 1 or isoform 7 by themselves (in vitro). Active phosphatase isoform 7 and inactive isoform 2 interact with each other, but give rise to lower phosphatase activity than isoform 7 by itself (in vitro). Interacts with PRDM8. In terms of processing, polyubiquitinated by NHLRC1/malin. Post-translationally, phosphorylation on Ser-25 by AMPK affects the phosphatase activity of the enzyme and its ability to homodimerize and interact with NHLRC1, PPP1R3C or PRKAA2. As to expression, expressed in heart, skeletal muscle, kidney, pancreas and brain. Isoform 4 is also expressed in the placenta.

The protein localises to the cytoplasm. Its subcellular location is the endoplasmic reticulum membrane. It localises to the cell membrane. The protein resides in the nucleus. The enzyme catalyses O-phospho-L-tyrosyl-[protein] + H2O = L-tyrosyl-[protein] + phosphate. It carries out the reaction O-phospho-L-seryl-[protein] + H2O = L-seryl-[protein] + phosphate. It catalyses the reaction O-phospho-L-threonyl-[protein] + H2O = L-threonyl-[protein] + phosphate. Plays an important role in preventing glycogen hyperphosphorylation and the formation of insoluble aggregates, via its activity as glycogen phosphatase, and by promoting the ubiquitination of proteins involved in glycogen metabolism via its interaction with the E3 ubiquitin ligase NHLRC1/malin. Shows strong phosphatase activity towards complex carbohydrates in vitro, avoiding glycogen hyperphosphorylation which is associated with reduced branching and formation of insoluble aggregates. Dephosphorylates phosphotyrosine and synthetic substrates, such as para-nitrophenylphosphate (pNPP), and has low activity with phosphoserine and phosphothreonine substrates (in vitro). Has been shown to dephosphorylate MAPT. Forms a complex with NHLRC1/malin and HSP70, which suppresses the cellular toxicity of misfolded proteins by promoting their degradation through the ubiquitin-proteasome system (UPS). Acts as a scaffold protein to facilitate PPP1R3C/PTG ubiquitination by NHLRC1/malin. Also promotes proteasome-independent protein degradation through the macroautophagy pathway. In terms of biological role, does not bind to glycogen. Lacks phosphatase activity and might function as a dominant-negative regulator for the phosphatase activity of isoform 1 and isoform 7. Functionally, has phosphatase activity (in vitro). The chain is Laforin (EPM2A) from Homo sapiens (Human).